Consider the following 448-residue polypeptide: Probable tryptophanase (448 aa).

Residue lysine 253 is modified to N6-(pyridoxal phosphate)lysine.

It belongs to the beta-eliminating lyase family. Requires pyridoxal 5'-phosphate as cofactor.

It carries out the reaction L-tryptophan + H2O = indole + pyruvate + NH4(+). It functions in the pathway amino-acid degradation; L-tryptophan degradation via pyruvate pathway; indole and pyruvate from L-tryptophan: step 1/1. The sequence is that of Probable tryptophanase from Halobacterium salinarum (strain ATCC 29341 / DSM 671 / R1).